A 153-amino-acid chain; its full sequence is uncharacterized protein (153 aa).

3 consecutive transmembrane segments (helical) span residues 17–37, 44–64, and 118–138; these read ITLI…SMFF, FLLC…IGMG, and FVFI…TLII.

The protein to M.jannaschii MJ0129 and MJ0554.

Its subcellular location is the cell membrane. This is an uncharacterized protein from Methanocaldococcus jannaschii (strain ATCC 43067 / DSM 2661 / JAL-1 / JCM 10045 / NBRC 100440) (Methanococcus jannaschii).